A 407-amino-acid chain; its full sequence is Indoleamine 2,3-dioxygenase 2 (407 aa).

His347 serves as a coordination point for heme.

The protein belongs to the indoleamine 2,3-dioxygenase family. Heme serves as cofactor. In terms of tissue distribution, detected in liver, small intestine, spleen, placenta, thymus, lung, brain, kidney, and colon. Also expressed at low level in testis and thyroid. Not expressed in the majority of human tumor samples (&gt;99%).

The catalysed reaction is L-tryptophan + O2 = N-formyl-L-kynurenine. Its pathway is amino-acid degradation; L-tryptophan degradation via kynurenine pathway; L-kynurenine from L-tryptophan: step 1/2. Activity is inhibited by D-1MT (1-methyl-D-tryptophan) and MTH-trp (methylthiohydantoin-DL-tryptophan) but not L-1MT (1-methyl-L-tryptophan). Functionally, catalyzes the first and rate limiting step of the catabolism of the essential amino acid tryptophan along the kynurenine pathway. Involved in immune regulation. May not play a significant role in tryptophan-related tumoral resistance. This chain is Indoleamine 2,3-dioxygenase 2, found in Homo sapiens (Human).